Here is a 182-residue protein sequence, read N- to C-terminus: CDP-diacylglycerol--glycerol-3-phosphate 3-phosphatidyltransferase (182 aa).

At 2-12 (QFNIPTLLTLF) the chain is on the cytoplasmic side. The chain crosses the membrane as a helical span at residues 13–37 (RVILIPFFVLVFYLPVTWSPFAAAL). The Periplasmic portion of the chain corresponds to 38-60 (IFCVAAVTDWFDGFLARRWNQST). The helical transmembrane segment at 61-81 (RFGAFLDPVADKVLVAIAMVL) threads the bilayer. Residues 82–86 (VTEHY) lie on the Cytoplasmic side of the membrane. Residues 87 to 107 (HSWWVTLPAATMIAREIIISA) form a helical membrane-spanning segment. Residues 108–145 (LREWMAELGKRSSVAVSWIGKVKTTAQMVALAWLLWRP) are Periplasmic-facing. Residues 146 to 168 (NIWVEYVGIALFFVAAVLTLWSM) form a helical membrane-spanning segment. At 169–181 (LQYLSAARADLLD) the chain is on the cytoplasmic side.

Belongs to the CDP-alcohol phosphatidyltransferase class-I family.

Its subcellular location is the cell inner membrane. It catalyses the reaction a CDP-1,2-diacyl-sn-glycerol + sn-glycerol 3-phosphate = a 1,2-diacyl-sn-glycero-3-phospho-(1'-sn-glycero-3'-phosphate) + CMP + H(+). It functions in the pathway phospholipid metabolism; phosphatidylglycerol biosynthesis; phosphatidylglycerol from CDP-diacylglycerol: step 1/2. Catalyzes the conversion of cytidine diphosphate diacylglycerol (CDP-DG) and glycerol 3-phosphate into phosphatidylglycerol. Essential for the synthesis of anionic phospholipids, thereby playing a role in balancing the ratio of zwitterionic and anionic phospholipids, which is thought to be important for normal membrane function. This Shigella boydii serotype 4 (strain Sb227) protein is CDP-diacylglycerol--glycerol-3-phosphate 3-phosphatidyltransferase.